The sequence spans 122 residues: Large ribosomal subunit protein uL14 (122 aa).

This sequence belongs to the universal ribosomal protein uL14 family. Part of the 50S ribosomal subunit. Forms a cluster with proteins L3 and L19. In the 70S ribosome, L14 and L19 interact and together make contacts with the 16S rRNA in bridges B5 and B8.

Its function is as follows. Binds to 23S rRNA. Forms part of two intersubunit bridges in the 70S ribosome. The sequence is that of Large ribosomal subunit protein uL14 from Rickettsia canadensis (strain McKiel).